A 255-amino-acid polypeptide reads, in one-letter code: Superoxide dismutase [Fe] 2, chloroplastic (255 aa).

A chloroplast-targeting transit peptide spans 1–32 (MAAFASALRVLPSPPAAVPRRLRSREQRQGCR). Residues H67, H119, D203, and H207 each coordinate Fe cation.

It belongs to the iron/manganese superoxide dismutase family. In terms of assembly, homodimer. It depends on Fe cation as a cofactor. In terms of tissue distribution, strongly expressed in the stems of the young seedlings, etiolated seedlings and embryogenic calli, but only minimally expressed in the leaves and the roots.

The protein localises to the plastid. Its subcellular location is the chloroplast. It carries out the reaction 2 superoxide + 2 H(+) = H2O2 + O2. Functionally, destroys superoxide anion radicals which are normally produced within the cells and which are toxic to biological systems. The sequence is that of Superoxide dismutase [Fe] 2, chloroplastic from Oryza sativa subsp. japonica (Rice).